Consider the following 95-residue polypeptide: Large ribosomal subunit protein bL25 (95 aa).

Belongs to the bacterial ribosomal protein bL25 family. In terms of assembly, part of the 50S ribosomal subunit; part of the 5S rRNA/L5/L18/L25 subcomplex. Contacts the 5S rRNA. Binds to the 5S rRNA independently of L5 and L18.

This is one of the proteins that binds to the 5S RNA in the ribosome where it forms part of the central protuberance. The protein is Large ribosomal subunit protein bL25 of Actinobacillus pleuropneumoniae serotype 3 (strain JL03).